Here is an 883-residue protein sequence, read N- to C-terminus: Pre-mRNA-splicing factor syf1 homolog (883 aa).

HAT repeat units lie at residues 13 to 45 (INFE…HKAK), 46 to 78 (APNN…TRRK), 88 to 120 (PMYE…FMTS), 122 to 156 (CKIT…FVRR), 158 to 190 (EMPE…EADR), 268 to 303 (GLFD…FEEL), 368 to 406 (DKPA…FYEA), 463 to 495 (KRKI…LEES), 531 to 565 (NYFE…KFLE), 570 to 604 (TKLE…LEEE), 642 to 676 (YGLP…LETK), and 678 to 712 (GEVD…FEVR). Disordered regions lie at residues 794–851 (RGET…DEEG) and 864–883 (IPAK…SDGE). Residues 812–834 (DEIDIGDSDEDDEEEDDDEENEM) are compositionally biased toward acidic residues. Polar residues-rich tracts occupy residues 835–844 (TNENQASAAV) and 873–883 (KPSNQGDSDGE).

It belongs to the crooked-neck family. Component of the NTC(Nineteen)/Prp19 complex composed of at least fand, Prp19,CG9667/ISY1 and Cdc5/CDC5L. Within the complex, interacts with Prp19 and ISY1/CG9667.

The protein localises to the nucleus. Its function is as follows. Subunit of the NTC(Nineteen)/Prp19 complex, which is part of the spliceosome. The complex participates in spliceosome assembly, its remodeling and is required for efficient spliceosome activation. Essential for efficient pre-mRNA splicing. In embryos, efficient pre-mRNA splicing of zygotic transcripts is essential during dynamic cellular processes that require rapid division and/or dramatic changes in gene expression such as blastoderm cellularization, tracheal branching morphogenesis, Malpighian morphogenesis and epidermal development. Part of its role in promoting embryo tracheal development is also due to specifically splicing bnl transcripts which results in the activation of the BNL-FGF pathway. The chain is Pre-mRNA-splicing factor syf1 homolog from Drosophila melanogaster (Fruit fly).